An 817-amino-acid polypeptide reads, in one-letter code: Lon protease (817 aa).

The Lon N-terminal domain occupies Val-22–Leu-216. ATP is bound at residue Gly-368 to Thr-375. The 182-residue stretch at Ala-604–Gly-785 folds into the Lon proteolytic domain. Residues Ser-691 and Lys-734 contribute to the active site. Residues Asn-784–Lys-817 are disordered. Residues Thr-789–Lys-817 are compositionally biased toward basic residues.

The protein belongs to the peptidase S16 family. Homohexamer. Organized in a ring with a central cavity.

It localises to the cytoplasm. The catalysed reaction is Hydrolysis of proteins in presence of ATP.. Its function is as follows. ATP-dependent serine protease that mediates the selective degradation of mutant and abnormal proteins as well as certain short-lived regulatory proteins. Required for cellular homeostasis and for survival from DNA damage and developmental changes induced by stress. Degrades polypeptides processively to yield small peptide fragments that are 5 to 10 amino acids long. Binds to DNA in a double-stranded, site-specific manner. This Desulfosudis oleivorans (strain DSM 6200 / JCM 39069 / Hxd3) (Desulfococcus oleovorans) protein is Lon protease.